Here is a 146-residue protein sequence, read N- to C-terminus: Hemoglobin subunit beta (146 aa).

In terms of domain architecture, Globin spans 2–146 (HWSAEEKQLI…VAHALARKYH (145 aa)). Residues histidine 63 and histidine 92 each coordinate heme b.

It belongs to the globin family. In terms of assembly, heterotetramer of two alpha chains and two beta chains. In terms of tissue distribution, red blood cells.

Functionally, involved in oxygen transport from the lung to the various peripheral tissues. The chain is Hemoglobin subunit beta (HBB) from Anseranas semipalmata (Magpie goose).